The primary structure comprises 291 residues: ATP phosphoribosyltransferase (291 aa).

The protein belongs to the ATP phosphoribosyltransferase family. Long subfamily. Mg(2+) is required as a cofactor.

The protein resides in the cytoplasm. The catalysed reaction is 1-(5-phospho-beta-D-ribosyl)-ATP + diphosphate = 5-phospho-alpha-D-ribose 1-diphosphate + ATP. It participates in amino-acid biosynthesis; L-histidine biosynthesis; L-histidine from 5-phospho-alpha-D-ribose 1-diphosphate: step 1/9. Its activity is regulated as follows. Feedback inhibited by histidine. Catalyzes the condensation of ATP and 5-phosphoribose 1-diphosphate to form N'-(5'-phosphoribosyl)-ATP (PR-ATP). Has a crucial role in the pathway because the rate of histidine biosynthesis seems to be controlled primarily by regulation of HisG enzymatic activity. This is ATP phosphoribosyltransferase from Desulfosudis oleivorans (strain DSM 6200 / JCM 39069 / Hxd3) (Desulfococcus oleovorans).